Reading from the N-terminus, the 152-residue chain is Nucleoside diphosphate kinase (152 aa).

ATP contacts are provided by lysine 11, phenylalanine 59, arginine 87, threonine 93, arginine 104, and asparagine 114. The Pros-phosphohistidine intermediate role is filled by histidine 117.

The protein belongs to the NDK family. In terms of assembly, homotetramer. Mg(2+) is required as a cofactor.

The protein localises to the cytoplasm. It carries out the reaction dZDP + ATP = dZTP + ADP. The catalysed reaction is a 2'-deoxyribonucleoside 5'-diphosphate + ATP = a 2'-deoxyribonucleoside 5'-triphosphate + ADP. The enzyme catalyses a ribonucleoside 5'-diphosphate + ATP = a ribonucleoside 5'-triphosphate + ADP. It participates in purine metabolism. Functionally, major role in the synthesis of nucleoside triphosphates other than ATP. The ATP gamma phosphate is transferred to the NDP beta phosphate via a ping-pong mechanism, using a phosphorylated active-site intermediate. In terms of biological role, (Microbial infection) Catalyzes the phosphorylation of dZDP to dZTP, when the bacterium is infected by a phage that produces the substrate for the synthesis of dZTP (2- amino-2'-deoxyadenosine 5'-triphosphate), which is then used by the phage as a DNA polymerase substrate. The polypeptide is Nucleoside diphosphate kinase (Synechococcus sp. (strain WH7803)).